The sequence spans 118 residues: Waprin-Enh1 (118 aa).

The N-terminal stretch at 1 to 24 is a signal peptide; it reads MKTLTGLLLVGLLALWIGLPSTSS. WAP domains are found at residues 25 to 72 and 74 to 118; these read KILF…RSCR and PPVL…RICK. Intrachain disulfides connect cysteine 30/cysteine 63, cysteine 40/cysteine 67, cysteine 50/cysteine 62, cysteine 56/cysteine 71, cysteine 81/cysteine 109, cysteine 88/cysteine 113, cysteine 96/cysteine 108, and cysteine 102/cysteine 117.

Belongs to the venom waprin family. As to expression, expressed by the venom gland.

The protein localises to the secreted. In terms of biological role, damages membranes of susceptible bacteria. Has no hemolytic activity. Not toxic to mice. Does not inhibit the proteinases elastase and cathepsin G. The sequence is that of Waprin-Enh1 from Pseudoferania polylepis (Macleay's water snake).